The following is a 2110-amino-acid chain: Tenascin (2110 aa).

The signal sequence occupies residues 1 to 22 (MGAVTWLLPGIFLALFALTPEG). A glycan (N-linked (GlcNAc...) asparagine) is linked at asparagine 38. A phosphoserine mark is found at serine 65, serine 70, and serine 72. Residues 69-91 (ESASGEKDLTPTPESSGSFQEHT) form a disordered region. Serine 72 carries O-linked (Xyl...) (chondroitin sulfate) serine glycosylation. Polar residues predominate over residues 80–89 (TPESSGSFQE). Residues 118–142 (DVKELLSRLEELELLVSSLREQCTM) adopt a coiled-coil conformation. Asparagine 166 and asparagine 184 each carry an N-linked (GlcNAc...) asparagine glycan. One can recognise an EGF-like 1; incomplete domain in the interval 174-185 (CVCEPGWKGPNC). EGF-like domains lie at 186–216 (SEPDCPGNCNLRGQCLDGQCICDEGFTGEDC), 217–247 (SQLACPNDCNDQGRCVNGVCVCFEGYAGPDC), 248–279 (GLEVCPVPCSEEHGMCVDGRCVCKDGFAGEDC), 280–310 (NEPLCLNNCYNRGRCVENECVCDEGFTGEDC), 311–341 (SELICPNDCFDRGRCINGTCYCEEGFTGEDC), 342–372 (GELTCPNDCQGRGQCEEGQCVCNEGFAGADC), 373–403 (SEKRCPADCHHRGRCLNGQCECDDGFTGADC), 404–434 (GDLQCPNGCSGHGRCVNGQCVCDEGYTGEDC), 435–465 (SQRRCPNDCHNRGLCVQGKCICEQGFKGFDC), 466–496 (SEMSCPNDCHQHGRCVNGMCICDDDYTGEDC), 497–527 (RDRRCPRDCSQRGRCVDGQCICEDGFTGPDC), 528–558 (AELSCPSDCHGHGRCVNGQCICHEGFTGKDC), 559–589 (KEQRCPSDCHGQGRCEDGQCICHEGFTGLDC), and 590–621 (GQRSCPNDCSNQGQCVSGRCICNEGYTGIDCS). 42 cysteine pairs are disulfide-bonded: cysteine 190–cysteine 200, cysteine 194–cysteine 205, cysteine 207–cysteine 216, cysteine 221–cysteine 231, cysteine 225–cysteine 236, cysteine 238–cysteine 247, cysteine 252–cysteine 263, cysteine 256–cysteine 268, cysteine 270–cysteine 279, cysteine 284–cysteine 294, cysteine 288–cysteine 299, cysteine 301–cysteine 310, cysteine 315–cysteine 325, cysteine 319–cysteine 330, cysteine 332–cysteine 341, cysteine 346–cysteine 356, cysteine 350–cysteine 361, cysteine 363–cysteine 372, cysteine 377–cysteine 387, cysteine 381–cysteine 392, cysteine 394–cysteine 403, cysteine 408–cysteine 418, cysteine 412–cysteine 423, cysteine 425–cysteine 434, cysteine 439–cysteine 449, cysteine 443–cysteine 454, cysteine 456–cysteine 465, cysteine 470–cysteine 480, cysteine 474–cysteine 485, cysteine 487–cysteine 496, cysteine 501–cysteine 511, cysteine 505–cysteine 516, cysteine 518–cysteine 527, cysteine 532–cysteine 542, cysteine 536–cysteine 547, cysteine 549–cysteine 558, cysteine 563–cysteine 573, cysteine 567–cysteine 578, cysteine 580–cysteine 589, cysteine 594–cysteine 604, cysteine 598–cysteine 609, and cysteine 611–cysteine 620. Asparagine 327 is a glycosylation site (N-linked (GlcNAc...) asparagine). 14 consecutive Fibronectin type-III domains span residues 625–715 (PPKD…LPAP), 716–804 (EGLK…TRLD), 805–894 (APSH…TGLD), 895–988 (APRN…IDAP), 989–1077 (KDLR…VPSL), 1078–1165 (ENLT…TGTT), 1167–1259 (NLGE…LPQL), 1260–1348 (GGLS…AREP), 1349–1440 (EIGN…ALPL), 1442–1530 (ENLT…EAEP), 1531–1620 (EVDN…TAMG), 1621–1710 (SPKE…ALDG), 1711–1797 (PSGL…TDLD), and 1798–1886 (SPRE…IGLL). Residue asparagine 788 is glycosylated (N-linked (GlcNAc...) asparagine). Threonine 905 is subject to Phosphothreonine. N-linked (GlcNAc...) asparagine glycans are attached at residues asparagine 1018, asparagine 1079, asparagine 1093, asparagine 1119, asparagine 1184, asparagine 1210, asparagine 1275, asparagine 1301, asparagine 1354, asparagine 1364, asparagine 1394, and asparagine 1443. The N-linked (GlcNAc...) asparagine glycan is linked to asparagine 1718. The 216-residue stretch at 1884–2099 (GLLYPFPRDC…FAEMKLRPSN (216 aa)) folds into the Fibrinogen C-terminal domain. 2 N-linked (GlcNAc...) asparagine glycosylation sites follow: asparagine 1969 and asparagine 2071.

The protein belongs to the tenascin family. As to quaternary structure, homohexamer; disulfide-linked. A homotrimer may be formed in the triple coiled-coil region and may be stabilized by disulfide rings at both ends. Two of such half-hexabrachions may be disulfide linked within the central globule. Interacts with CSPG4. Interacts (via the 3rd fibronectin type-III domain) with integrin ITGA9:ITGB1. In terms of processing, N-glycosylated. Expressed in the corneal limbus, the periosteum and the rib molecular layer of the cerebellum, the matrix of kidney tubules, blood vessels, stomach and intestine (at protein level). As to expression, weakly expressed in the brain. In terms of tissue distribution, highly expressed in the thymus and moderately expressed in the brain.

The protein localises to the secreted. It localises to the extracellular space. Its subcellular location is the extracellular matrix. In terms of biological role, extracellular matrix protein implicated in guidance of migrating neurons as well as axons during development, synaptic plasticity as well as neuronal regeneration. Promotes neurite outgrowth when provided to neurons in culture. May play a role in supporting the growth of epithelial tumors. Ligand for integrins ITGA8:ITGB1, ITGA9:ITGB1, ITGAV:ITGB3 and ITGAV:ITGB6. In tumors, stimulates angiogenesis by elongation, migration and sprouting of endothelial cells. This chain is Tenascin, found in Mus musculus (Mouse).